Reading from the N-terminus, the 106-residue chain is Small ribosomal subunit protein uS10 (106 aa).

It belongs to the universal ribosomal protein uS10 family. Part of the 30S ribosomal subunit.

Its function is as follows. Involved in the binding of tRNA to the ribosomes. The polypeptide is Small ribosomal subunit protein uS10 (Synechococcus sp. (strain RCC307)).